Consider the following 369-residue polypeptide: Putative 2-aminoethylphosphonate import ATP-binding protein PhnT (369 aa).

The region spanning 19 to 250 (IVLDSLRVAY…PPNRFAAEFL (232 aa)) is the ABC transporter domain. Position 51–58 (51–58 (GPSGSGKT)) interacts with ATP.

Belongs to the ABC transporter superfamily. 2-aminoethylphosphonate importer (TC 3.A.1.11.5) family.

It localises to the cell inner membrane. Probably part of the PhnSTUV complex (TC 3.A.1.11.5) involved in 2-aminoethylphosphonate import. Probably responsible for energy coupling to the transport system. The chain is Putative 2-aminoethylphosphonate import ATP-binding protein PhnT (phnT) from Salmonella typhi.